Consider the following 90-residue polypeptide: Acylphosphatase (90 aa).

Positions 3–88 (TWHMTAHGRV…GKFEDFDLRP (86 aa)) constitute an Acylphosphatase-like domain. Active-site residues include Arg18 and Asn36.

It belongs to the acylphosphatase family.

The enzyme catalyses an acyl phosphate + H2O = a carboxylate + phosphate + H(+). This Cupriavidus pinatubonensis (strain JMP 134 / LMG 1197) (Cupriavidus necator (strain JMP 134)) protein is Acylphosphatase (acyP).